The sequence spans 277 residues: 4-hydroxy-tetrahydrodipicolinate reductase (277 aa).

Residues 10–15 (GAGGRM) and Glu36 each bind NAD(+). NADP(+) is bound at residue Arg37. Residues 100–102 (GTT) and 124–127 (SGNM) contribute to the NAD(+) site. His158 (proton donor/acceptor) is an active-site residue. His159 contributes to the (S)-2,3,4,5-tetrahydrodipicolinate binding site. Lys162 (proton donor) is an active-site residue. 168-169 (GT) serves as a coordination point for (S)-2,3,4,5-tetrahydrodipicolinate.

The protein belongs to the DapB family.

The protein localises to the cytoplasm. The enzyme catalyses (S)-2,3,4,5-tetrahydrodipicolinate + NAD(+) + H2O = (2S,4S)-4-hydroxy-2,3,4,5-tetrahydrodipicolinate + NADH + H(+). It catalyses the reaction (S)-2,3,4,5-tetrahydrodipicolinate + NADP(+) + H2O = (2S,4S)-4-hydroxy-2,3,4,5-tetrahydrodipicolinate + NADPH + H(+). It participates in amino-acid biosynthesis; L-lysine biosynthesis via DAP pathway; (S)-tetrahydrodipicolinate from L-aspartate: step 4/4. Its function is as follows. Catalyzes the conversion of 4-hydroxy-tetrahydrodipicolinate (HTPA) to tetrahydrodipicolinate. This Chelativorans sp. (strain BNC1) protein is 4-hydroxy-tetrahydrodipicolinate reductase.